Reading from the N-terminus, the 72-residue chain is Translation initiation factor IF-1 (72 aa).

The region spanning 1 to 72 (MAKEDVIEVE…NRGRIIYRFK (72 aa)) is the S1-like domain.

Belongs to the IF-1 family. In terms of assembly, component of the 30S ribosomal translation pre-initiation complex which assembles on the 30S ribosome in the order IF-2 and IF-3, IF-1 and N-formylmethionyl-tRNA(fMet); mRNA recruitment can occur at any time during PIC assembly.

The protein localises to the cytoplasm. Functionally, one of the essential components for the initiation of protein synthesis. Stabilizes the binding of IF-2 and IF-3 on the 30S subunit to which N-formylmethionyl-tRNA(fMet) subsequently binds. Helps modulate mRNA selection, yielding the 30S pre-initiation complex (PIC). Upon addition of the 50S ribosomal subunit IF-1, IF-2 and IF-3 are released leaving the mature 70S translation initiation complex. This Syntrophomonas wolfei subsp. wolfei (strain DSM 2245B / Goettingen) protein is Translation initiation factor IF-1.